A 183-amino-acid chain; its full sequence is Capsid protein (183 aa).

The interval 136–183 (NAPILSTLPETTVVRQRGRAPRRRTPSPRRRRSQSPRRRRSQSPASQC) is disordered. A compositionally biased stretch (basic residues) spans 151-176 (QRGRAPRRRTPSPRRRRSQSPRRRRS). A 1; half-length repeat occupies 155-161 (APRRRTP). Positions 155 to 177 (APRRRTPSPRRRRSQSPRRRRSQ) are 3 X 8 AA repeats of S-P-R-R-R-[PR]-S-Q. Residues 158–175 (RRTPSPRRRRSQSPRRRR) carry the Bipartite nuclear localization signal motif. A phosphoserine; by host mark is found at S162 and S170. A run of 2 repeats spans residues 162-169 (SPRRRRSQ) and 170-177 (SPRRRRSQ). Positions 177–183 (QSPASQC) are RNA binding.

Belongs to the orthohepadnavirus core antigen family. As to quaternary structure, homodimerizes, then multimerizes. Interacts with cytosol exposed regions of viral L glycoprotein present in the reticulum-to-Golgi compartment. Interacts with human FLNB. Phosphorylated form interacts with host importin alpha; this interaction depends on the exposure of the NLS, which itself depends upon genome maturation and/or phosphorylation of the capsid protein. Interacts with host NUP153. Post-translationally, phosphorylated by host SRPK1, SRPK2, and maybe protein kinase C or GAPDH. Phosphorylation is critical for pregenomic RNA packaging. Protein kinase C phosphorylation is stimulated by HBx protein and may play a role in transport of the viral genome to the nucleus at the late step during the viral replication cycle.

The protein resides in the virion. It is found in the host cytoplasm. In terms of biological role, self assembles to form an icosahedral capsid. Most capsids appear to be large particles with an icosahedral symmetry of T=4 and consist of 240 copies of capsid protein, though a fraction forms smaller T=3 particles consisting of 180 capsid proteins. Entering capsids are transported along microtubules to the nucleus. Phosphorylation of the capsid is thought to induce exposure of nuclear localization signal in the C-terminal portion of the capsid protein that allows binding to the nuclear pore complex via the importin (karyopherin-) alpha and beta. Capsids are imported in intact form through the nuclear pore into the nuclear basket, where it probably binds NUP153. Only capsids that contain the mature viral genome can release the viral DNA and capsid protein into the nucleoplasm. Immature capsids get stuck in the basket. Capsids encapsulate the pre-genomic RNA and the P protein. Pre-genomic RNA is reverse-transcribed into DNA while the capsid is still in the cytoplasm. The capsid can then either be directed to the nucleus, providing more genomes for transcription, or bud through the endoplasmic reticulum to provide new virions. In Homo sapiens (Human), this protein is Capsid protein.